The chain runs to 278 residues: Putative transposase for insertion sequence element IS986/IS6110 (278 aa).

The 168-residue stretch at 101 to 268 (GPPAPNRLWV…VPPVELEAAY (168 aa)) folds into the Integrase catalytic domain.

Its function is as follows. Involved in the transposition of the insertion sequence. The protein is Putative transposase for insertion sequence element IS986/IS6110 of Mycobacterium tuberculosis (strain CDC 1551 / Oshkosh).